Here is a 77-residue protein sequence, read N- to C-terminus: Translation initiation factor IF-1, chloroplastic (77 aa).

Residues 1–72 (MNKQGLFQME…TKGRIVYRQR (72 aa)) form the S1-like domain.

Belongs to the IF-1 family. As to quaternary structure, component of the 30S ribosomal translation pre-initiation complex which assembles on the 30S ribosome in the order IF-2 and IF-3, IF-1 and N-formylmethionyl-tRNA(fMet); mRNA recruitment can occur at any time during PIC assembly.

The protein resides in the plastid. The protein localises to the chloroplast. In terms of biological role, one of the essential components for the initiation of protein synthesis. Stabilizes the binding of IF-2 and IF-3 on the 30S subunit to which N-formylmethionyl-tRNA(fMet) subsequently binds. Helps modulate mRNA selection, yielding the 30S pre-initiation complex (PIC). Upon addition of the 50S ribosomal subunit IF-1, IF-2 and IF-3 are released leaving the mature 70S translation initiation complex. The polypeptide is Translation initiation factor IF-1, chloroplastic (Nephroselmis olivacea (Green alga)).